We begin with the raw amino-acid sequence, 348 residues long: Putative zinc metalloprotease HP_0258 (348 aa).

Histidine 16 is a binding site for Zn(2+). Residue glutamate 17 is part of the active site. Histidine 20 contacts Zn(2+). 5 helical membrane-spanning segments follow: residues 43-63 (CFFK…GGYV), 93-113 (WILF…YFFL), 247-267 (LIMG…VGAL), 275-295 (MLLL…LLPI), and 324-344 (LWLA…FNDL). The PDZ domain maps to 106–175 (AILVYFFLAL…GELVLEIERN (70 aa)).

This sequence belongs to the peptidase M50B family. Requires Zn(2+) as cofactor.

The protein localises to the cell inner membrane. The chain is Putative zinc metalloprotease HP_0258 from Helicobacter pylori (strain ATCC 700392 / 26695) (Campylobacter pylori).